We begin with the raw amino-acid sequence, 882 residues long: Chondroitin sulfate synthase 3 (882 aa).

Residues 1 to 7 (MAVRSRR) are Cytoplasmic-facing. Residues 8 to 28 (PWMSVALGLVLGFTAASWLIA) traverse the membrane as a helical; Signal-anchor for type II membrane protein segment. Over 29–882 (PRVAELSERK…LGVRYNRTLS (854 aa)) the chain is Lumenal. The tract at residues 46–167 (SYYGRSAAGP…GDGGAAAPSA (122 aa)) is disordered. 2 stretches are compositionally biased toward low complexity: residues 59–69 (AQQPLPQPQSR) and 120–131 (GATGLPGAPAAE). 3 N-linked (GlcNAc...) asparagine glycosylation sites follow: asparagine 155, asparagine 279, and asparagine 710. Residues aspartate 720 and histidine 834 each coordinate a divalent metal cation. N-linked (GlcNAc...) asparagine glycosylation is present at asparagine 878.

Belongs to the chondroitin N-acetylgalactosaminyltransferase family. The cofactor is Co(2+). Mn(2+) serves as cofactor. Cd(2+) is required as a cofactor. In terms of tissue distribution, detected at low levels in brain, cerebral cortex, uterus and small intestine.

Its subcellular location is the golgi apparatus. It is found in the golgi stack membrane. It carries out the reaction 3-O-(beta-D-GlcA-(1-&gt;3)-beta-D-GalNAc-(1-&gt;4)-beta-D-GlcA-(1-&gt;3)-beta-D-Gal-(1-&gt;3)-beta-D-Gal-(1-&gt;4)-beta-D-Xyl)-L-seryl-[protein] + UDP-N-acetyl-alpha-D-galactosamine = 3-O-(beta-D-GalNAc-(1-&gt;4)-beta-D-GlcA-(1-&gt;3)-beta-D-GalNAc-(1-&gt;4)-beta-D-GlcA-(1-&gt;3)-beta-D-Gal-(1-&gt;3)-beta-D-Gal-(1-&gt;4)-beta-D-Xyl)-L-seryl-[protein] + UDP + H(+). The catalysed reaction is 3-O-{beta-D-GlcA-(1-&gt;3)-[beta-D-GalNAc-(1-&gt;4)-beta-D-GlcA-(1-&gt;3)](n)-beta-D-GalNAc-(1-&gt;4)-beta-D-GlcA-(1-&gt;3)-beta-D-Gal-(1-&gt;3)-beta-D-Gal-(1-&gt;4)-beta-D-Xyl}-L-seryl-[protein] + UDP-N-acetyl-alpha-D-galactosamine = 3-O-{[beta-D-GalNAc-(1-&gt;4)-beta-D-GlcA-(1-&gt;3)](n+1)-beta-D-GalNAc-(1-&gt;4)-beta-D-GlcA-(1-&gt;3)-beta-D-Gal-(1-&gt;3)-beta-D-Gal-(1-&gt;4)-beta-D-Xyl}-L-seryl-[protein] + UDP + H(+). It catalyses the reaction 3-O-(beta-D-GalNAc-(1-&gt;4)-beta-D-GlcA-(1-&gt;3)-beta-D-Gal-(1-&gt;3)-beta-D-Gal-(1-&gt;4)-beta-D-Xyl)-L-seryl-[protein] + UDP-alpha-D-glucuronate = 3-O-(beta-D-GlcA-(1-&gt;3)-beta-D-GalNAc-(1-&gt;4)-beta-D-GlcA-(1-&gt;3)-beta-D-Gal-(1-&gt;3)-beta-D-Gal-(1-&gt;4)-beta-D-Xyl)-L-seryl-[protein] + UDP + H(+). The enzyme catalyses 3-O-{[beta-D-GalNAc-(1-&gt;4)-beta-D-GlcA-(1-&gt;3)](n)-beta-D-GalNAc-(1-&gt;4)-beta-D-GlcA-(1-&gt;3)-beta-D-Gal-(1-&gt;3)-beta-D-Gal-(1-&gt;4)-beta-D-Xyl}-L-seryl-[protein] + UDP-alpha-D-glucuronate = 3-O-{beta-D-GlcA-(1-&gt;3)-[beta-D-GalNAc-(1-&gt;4)-beta-D-GlcA-(1-&gt;3)](n)-beta-D-GalNAc-(1-&gt;4)-beta-D-GlcA-(1-&gt;3)-beta-D-Gal-(1-&gt;3)-beta-D-Gal-(1-&gt;4)-beta-D-Xyl}-L-seryl-[protein] + UDP + H(+). Functionally, has both beta-1,3-glucuronic acid and beta-1,4-N-acetylgalactosamine transferase activity. Transfers glucuronic acid (GlcUA) from UDP-GlcUA and N-acetylgalactosamine (GalNAc) from UDP-GalNAc to the non-reducing end of the elongating chondroitin polymer. Specific activity is much reduced compared to CHSY1. The sequence is that of Chondroitin sulfate synthase 3 (CHSY3) from Homo sapiens (Human).